Consider the following 353-residue polypeptide: sn-glycerol-3-phosphate import ATP-binding protein UgpC (353 aa).

An ABC transporter domain is found at 4–234 (ILLNDVRKSY…PASEFVAGFI (231 aa)). 36 to 43 (GPSGCGKS) is an ATP binding site.

It belongs to the ABC transporter superfamily. sn-glycerol-3-phosphate importer (TC 3.A.1.1.3) family. In terms of assembly, the complex is composed of two ATP-binding proteins (UgpC), two transmembrane proteins (UgpA and UgpE) and a solute-binding protein (UgpB).

The protein resides in the cell inner membrane. It carries out the reaction sn-glycerol 3-phosphate(out) + ATP + H2O = sn-glycerol 3-phosphate(in) + ADP + phosphate + H(+). Its function is as follows. Part of the ABC transporter complex UgpBAEC involved in sn-glycerol-3-phosphate (G3P) import. Responsible for energy coupling to the transport system. This is sn-glycerol-3-phosphate import ATP-binding protein UgpC from Paracoccus denitrificans (strain Pd 1222).